The sequence spans 599 residues: MGEALNGLKRTMMCGEPREEHVGQKITLMGWVQRNRKLGGLDFIDLRDKTGIMQVVFGEEINSEAFEKAKSVRPEYCIAVTGEVVKRESVNENMPTGFVELKCESLKILSESETPPIYIKENLDAAENIRLKYRYLDLRRPDMHRIFEIRSKTTKSIRDYLEKNDFLDVETPMLTKSTPEGARDYLVPSRNYRGMFYALPQSPQIFKQLLMVSGFDKYYQIVKCFRDEDLRANRQPEFTQVDMELSFVEQDDIMALNEGLIAHVFKEVAGVDVKLPIKRMTFKDAMEKYGSDKPDLRFGMEITNITEDVKDMDFVVFKSAIEAGGSVRALCLKGGATLGRKPLDKLGEFVKTYKAKGLAWIQLKEDGVKSSIAKFLTDDVTNSIIETMGAETGDAILIVADKESVVFQSLGALRLELAKQFELIKDKNEFNFTWITEFPLFEYSEEEERYTACHHPFTAPMEEDLEFLESAPGKVRSKAYDLVLNGEELGGGSIRIHDMELQQRMFKALGFTEEQAWERFGFLLQAFKFGPPPHGGLAFGLDRMIMFLAGTENIKDVIAFPKNQNAYCYLSEAPNIADEKQLTELGIGILPKQEKQEQE.

Glu-180 provides a ligand contact to L-aspartate. Residues 204-207 (QIFK) are aspartate. Arg-226 provides a ligand contact to L-aspartate. ATP is bound by residues 226–228 (RDE) and Gln-235. An L-aspartate-binding site is contributed by His-454. Glu-488 contacts ATP. Arg-495 serves as a coordination point for L-aspartate. An ATP-binding site is contributed by 540–543 (GLDR).

Belongs to the class-II aminoacyl-tRNA synthetase family. Type 1 subfamily. As to quaternary structure, homodimer.

It localises to the cytoplasm. The catalysed reaction is tRNA(Asp) + L-aspartate + ATP = L-aspartyl-tRNA(Asp) + AMP + diphosphate. Functionally, catalyzes the attachment of L-aspartate to tRNA(Asp) in a two-step reaction: L-aspartate is first activated by ATP to form Asp-AMP and then transferred to the acceptor end of tRNA(Asp). The protein is Aspartate--tRNA ligase of Clostridium botulinum (strain Eklund 17B / Type B).